The chain runs to 471 residues: Neuraminidase (471 aa).

Residues 1 to 6 (MNPNQK) are Intravirion-facing. A helical transmembrane segment spans residues 7–27 (LFALSGVAIALSVMNLLIGIS). The involved in apical transport and lipid raft association stretch occupies residues 11-33 (SGVAIALSVMNLLIGISNVGLNV). At 28–471 (NVGLNVSLHL…PDGAQIQYFS (444 aa)) the chain is on the virion surface side. Residues asparagine 32, asparagine 47, asparagine 56, asparagine 57, asparagine 67, asparagine 68, and asparagine 87 are each glycosylated (N-linked (GlcNAc...) asparagine; by host). A hypervariable stalk region region spans residues 36–87 (HLKEKGTKQEENLTCTTITQNNTTVVENTYVNNTTIITKEPDLKAPSYLLLN). Positions 90–471 (LCSVEGWVVI…PDGAQIQYFS (382 aa)) are head of neuraminidase. Cystine bridges form between cysteine 91–cysteine 419, cysteine 123–cysteine 128, cysteine 183–cysteine 230, cysteine 232–cysteine 237, cysteine 278–cysteine 291, cysteine 280–cysteine 289, cysteine 318–cysteine 336, and cysteine 423–cysteine 450. Residue arginine 117 coordinates substrate. Residue asparagine 145 is glycosylated (N-linked (GlcNAc...) asparagine; by host). Aspartate 150 serves as the catalytic Proton donor/acceptor. Arginine 151 is a binding site for substrate. Asparagine 200 and asparagine 234 each carry an N-linked (GlcNAc...) asparagine; by host glycan. Substrate is bound at residue 276–277 (EE). Arginine 292 is a substrate binding site. Ca(2+) contacts are provided by aspartate 293, glycine 297, and aspartate 324. Arginine 371 provides a ligand contact to substrate. N-linked (GlcNAc...) asparagine; by host glycosylation is present at asparagine 401. The active-site Nucleophile is the tyrosine 405.

The protein belongs to the glycosyl hydrolase 34 family. As to quaternary structure, homotetramer. Requires Ca(2+) as cofactor. N-glycosylated.

It localises to the virion membrane. The protein resides in the host apical cell membrane. The catalysed reaction is Hydrolysis of alpha-(2-&gt;3)-, alpha-(2-&gt;6)-, alpha-(2-&gt;8)- glycosidic linkages of terminal sialic acid residues in oligosaccharides, glycoproteins, glycolipids, colominic acid and synthetic substrates.. Inhibited by the neuraminidase inhibitors zanamivir (Relenza) and oseltamivir (Tamiflu). These drugs interfere with the release of progeny virus from infected cells and are effective against all influenza strains. Resistance to neuraminidase inhibitors is quite rare. Catalyzes the removal of terminal sialic acid residues from viral and cellular glycoconjugates. Cleaves off the terminal sialic acids on the glycosylated HA during virus budding to facilitate virus release. Additionally helps virus spread through the circulation by further removing sialic acids from the cell surface. These cleavages prevent self-aggregation and ensure the efficient spread of the progeny virus from cell to cell. Otherwise, infection would be limited to one round of replication. Described as a receptor-destroying enzyme because it cleaves a terminal sialic acid from the cellular receptors. May facilitate viral invasion of the upper airways by cleaving the sialic acid moieties on the mucin of the airway epithelial cells. Likely to plays a role in the budding process through its association with lipid rafts during intracellular transport. May additionally display a raft-association independent effect on budding. Plays a role in the determination of host range restriction on replication and virulence. Sialidase activity in late endosome/lysosome traffic seems to enhance virus replication. This Influenza A virus (strain A/Duck/Germany/1949 H10N7) protein is Neuraminidase.